A 168-amino-acid chain; its full sequence is Large ribosomal subunit protein uL16 (168 aa).

This sequence belongs to the universal ribosomal protein uL16 family.

This Thermofilum pendens (strain DSM 2475 / Hrk 5) protein is Large ribosomal subunit protein uL16.